Consider the following 308-residue polypeptide: Glutaminase (308 aa).

Substrate-binding residues include Ser66, Asn117, Glu161, Asn168, Tyr192, Tyr244, and Val262.

It belongs to the glutaminase family. Homotetramer.

The enzyme catalyses L-glutamine + H2O = L-glutamate + NH4(+). This is Glutaminase from Photorhabdus laumondii subsp. laumondii (strain DSM 15139 / CIP 105565 / TT01) (Photorhabdus luminescens subsp. laumondii).